The following is a 177-amino-acid chain: Nucleoside triphosphate/diphosphate phosphatase (177 aa).

The active-site Proton donor is the arginine 23. 6 residues coordinate Mg(2+): asparagine 87, aspartate 103, aspartate 105, aspartate 107, aspartate 120, and glutamate 123.

This sequence belongs to the Ntdp family. Mg(2+) is required as a cofactor.

It carries out the reaction a ribonucleoside 5'-triphosphate + H2O = a ribonucleoside 5'-diphosphate + phosphate + H(+). The catalysed reaction is a ribonucleoside 5'-diphosphate + H2O = a ribonucleoside 5'-phosphate + phosphate + H(+). In terms of biological role, has nucleoside phosphatase activity towards nucleoside triphosphates and nucleoside diphosphates. The polypeptide is Nucleoside triphosphate/diphosphate phosphatase (Streptococcus gordonii (strain Challis / ATCC 35105 / BCRC 15272 / CH1 / DL1 / V288)).